We begin with the raw amino-acid sequence, 865 residues long: Cadherin-related family member 1 (865 aa).

The first 23 residues, 1 to 23 (MKHVRHFIPSLFLSLVHVCLVQA), serve as a signal peptide directing secretion. Topologically, residues 24–705 (NYAPYFFDNG…TKDNPMKALG (682 aa)) are extracellular. Cadherin domains follow at residues 38–137 (NGNM…SPEF), 138–249 (INTP…PPMF), 250–356 (IGTP…PPTF), 362–475 (PQNR…VPKF), 476–579 (SSDY…SPEF), and 571–690 (DVND…GPMA). Residues 706-726 (VLAGVMGIMVLITIMISTAMF) traverse the membrane as a helical segment. At 727 to 865 (WRNKRSNKIM…RNASMGEPHI (139 aa)) the chain is on the cytoplasmic side. Positions 782–810 (ENSNNNVQAAPVPPAAPLPPPPPALAASG) are disordered. The span at 792-805 (PVPPAAPLPPPPPA) shows a compositional bias: pro residues.

It is found in the membrane. Its function is as follows. Potential calcium-dependent cell-adhesion protein. The sequence is that of Cadherin-related family member 1 (CDHR1) from Gallus gallus (Chicken).